A 110-amino-acid polypeptide reads, in one-letter code: Prothymosin alpha (110 aa).

Residue Met-1 is modified to N-acetylmethionine. Residues 1–110 are disordered; sequence MSDAAVDTSS…TKKQKTDEDD (110 aa). Ser-2 is modified (N-acetylserine; in Prothymosin alpha, N-terminally processed). At Ser-2 the chain carries Phosphoserine. Residue Thr-8 is modified to Phosphothreonine. Ser-9 and Ser-10 each carry phosphoserine. Residues Thr-13 and Thr-14 each carry the phosphothreonine modification. Over residues 13-31 the composition is skewed to basic and acidic residues; that stretch reads TTKDLKEKKEVVEEAENGR. N6-acetyllysine; alternate is present on Lys-15. The residue at position 15 (Lys-15) is an N6-succinyllysine; alternate. A compositionally biased stretch (acidic residues) spans 42 to 83; it reads ENGEQEADNEVDEEEEEGGEEEEEEEEGDGEEEDGDEDEEAE. Over residues 100–110 the composition is skewed to basic and acidic residues; it reads DTKKQKTDEDD. At Thr-101 the chain carries Phosphothreonine. Lys-102 bears the N6-acetyllysine; alternate mark. Residue Lys-102 forms a Glycyl lysine isopeptide (Lys-Gly) (interchain with G-Cter in SUMO2); alternate linkage. Thr-106 bears the Phosphothreonine mark.

It belongs to the pro/parathymosin family. In terms of assembly, interacts with NUPR1; regulates apoptotic process. Post-translationally, covalently linked to a small RNA of about 20 nucleotides.

Its subcellular location is the nucleus. Functionally, prothymosin alpha may mediate immune function by conferring resistance to certain opportunistic infections. This is Prothymosin alpha (PTMA) from Pongo abelii (Sumatran orangutan).